The primary structure comprises 520 residues: Cilia- and flagella-associated protein 157 (520 aa).

Positions 1–22 (MAPKKSVSKAGKELEVKKKGGK) are disordered. A compositionally biased stretch (basic and acidic residues) spans 10 to 22 (AGKELEVKKKGGK). Coiled coils occupy residues 33–189 (LAKE…LEKK) and 236–372 (LQMA…QATS). Residues 416 to 453 (PQKAACPHQESQSHGPPKESRPSIQLPRTGSLLPQLSD) form a disordered region. The segment covering 437-453 (PSIQLPRTGSLLPQLSD) has biased composition (polar residues).

Belongs to the CFAP157 family. In terms of assembly, interacts with TUBB and TUBA4A. Interacts with CEP350.

The protein resides in the cytoplasm. The protein localises to the cytoskeleton. Its subcellular location is the cilium basal body. Functionally, specifically required during spermatogenesis for flagellum morphogenesis and sperm motility. May be required to suppress the formation of supernumerary axonemes and ensure a correct ultrastructure. This Homo sapiens (Human) protein is Cilia- and flagella-associated protein 157.